We begin with the raw amino-acid sequence, 264 residues long: S-adenosylmethionine decarboxylase proenzyme (264 aa).

The active-site Schiff-base intermediate with substrate; via pyruvic acid is the Ser-113. Residue Ser-113 is modified to Pyruvic acid (Ser); by autocatalysis. The Proton acceptor; for processing activity role is filled by His-118. Residue Cys-141 is the Proton donor; for catalytic activity of the active site.

Belongs to the prokaryotic AdoMetDC family. Type 2 subfamily. Heterooctamer of four alpha and four beta chains arranged as a tetramer of alpha/beta heterodimers. The cofactor is pyruvate. In terms of processing, is synthesized initially as an inactive proenzyme. Formation of the active enzyme involves a self-maturation process in which the active site pyruvoyl group is generated from an internal serine residue via an autocatalytic post-translational modification. Two non-identical subunits are generated from the proenzyme in this reaction, and the pyruvate is formed at the N-terminus of the alpha chain, which is derived from the carboxyl end of the proenzyme. The post-translation cleavage follows an unusual pathway, termed non-hydrolytic serinolysis, in which the side chain hydroxyl group of the serine supplies its oxygen atom to form the C-terminus of the beta chain, while the remainder of the serine residue undergoes an oxidative deamination to produce ammonia and the pyruvoyl group blocking the N-terminus of the alpha chain.

It carries out the reaction S-adenosyl-L-methionine + H(+) = S-adenosyl 3-(methylsulfanyl)propylamine + CO2. The protein operates within amine and polyamine biosynthesis; S-adenosylmethioninamine biosynthesis; S-adenosylmethioninamine from S-adenosyl-L-methionine: step 1/1. Its function is as follows. Catalyzes the decarboxylation of S-adenosylmethionine to S-adenosylmethioninamine (dcAdoMet), the propylamine donor required for the synthesis of the polyamines spermine and spermidine from the diamine putrescine. The polypeptide is S-adenosylmethionine decarboxylase proenzyme (Stenotrophomonas maltophilia (strain R551-3)).